A 267-amino-acid chain; its full sequence is Outer membrane protein assembly factor BamD (267 aa).

Positions M1–A16 are cleaved as a signal peptide. C17 is lipidated: N-palmitoyl cysteine. The S-diacylglycerol cysteine moiety is linked to residue C17.

The protein belongs to the BamD family. Part of the Bam complex.

Its subcellular location is the cell outer membrane. In terms of biological role, part of the outer membrane protein assembly complex, which is involved in assembly and insertion of beta-barrel proteins into the outer membrane. Required for efficient transformation of Neisseria meningitidis by species-related DNA. The polypeptide is Outer membrane protein assembly factor BamD (Neisseria meningitidis serogroup B (strain ATCC BAA-335 / MC58)).